We begin with the raw amino-acid sequence, 119 residues long: Large ribosomal subunit protein uL24 (119 aa).

The protein belongs to the universal ribosomal protein uL24 family. As to quaternary structure, part of the 50S ribosomal subunit.

In terms of biological role, one of two assembly initiator proteins, it binds directly to the 5'-end of the 23S rRNA, where it nucleates assembly of the 50S subunit. Its function is as follows. One of the proteins that surrounds the polypeptide exit tunnel on the outside of the subunit. The chain is Large ribosomal subunit protein uL24 from Leifsonia xyli subsp. xyli (strain CTCB07).